Here is a 596-residue protein sequence, read N- to C-terminus: Thioredoxin reductase 1, mitochondrial (596 aa).

A disordered region spans residues L59–P87. The span at S68–G79 shows a compositional bias: low complexity. FAD contacts are provided by residues I120–G126, L143–K147, G159–K170, G233–G235, A262–R266, S282, F286, and Y302. C162 and C167 are disulfide-bonded. NADP(+)-binding positions include V322–R328 and P355. FAD contacts are provided by residues R392–L399, V429–I432, E438–A443, and F472. H569 serves as the catalytic Proton acceptor. P570 is a binding site for FAD. C594 and C595 are oxidised to a cystine.

This sequence belongs to the class-I pyridine nucleotide-disulfide oxidoreductase family. Homodimer. The cofactor is FAD. As to expression, during embryogenesis, expression is seen in germ cell progenitors, developing midgut, hindgut and proventriculus.

The protein localises to the mitochondrion. It is found in the cytoplasm. The enzyme catalyses [thioredoxin]-dithiol + NADP(+) = [thioredoxin]-disulfide + NADPH + H(+). Its function is as follows. Thioredoxin system is a major player in glutathione metabolism, due to the demonstrated absence of a glutathione reductase. Functionally interacts with the Sod/Cat reactive oxidation species (ROS) defense system and thereby has a role in preadult development and life span. Lack of a glutathione reductase suggests antioxidant defense in Drosophila, and probably in related insects, differs fundamentally from that in other organisms. The protein is Thioredoxin reductase 1, mitochondrial of Drosophila melanogaster (Fruit fly).